A 437-amino-acid chain; its full sequence is Tol-Pal system protein TolB (437 aa).

An N-terminal signal peptide occupies residues 1–30; it reads MLPTPSRSHKLSGYAAVLFFLWLVCSPAQA. The span at 410-423 shows a compositional bias: polar residues; that stretch reads SDGRTRQQLSTQTG. The interval 410 to 437 is disordered; that stretch reads SDGRTRQQLSTQTGDIREPAWGPLRRLQ.

It belongs to the TolB family. As to quaternary structure, the Tol-Pal system is composed of five core proteins: the inner membrane proteins TolA, TolQ and TolR, the periplasmic protein TolB and the outer membrane protein Pal. They form a network linking the inner and outer membranes and the peptidoglycan layer.

Its subcellular location is the periplasm. Its function is as follows. Part of the Tol-Pal system, which plays a role in outer membrane invagination during cell division and is important for maintaining outer membrane integrity. In Nitrosospira multiformis (strain ATCC 25196 / NCIMB 11849 / C 71), this protein is Tol-Pal system protein TolB.